Reading from the N-terminus, the 203-residue chain is MAKEIAKSLLDIEAVTLSPNDLYTWSSGIKSPIYCDNRVTLGYPLVRGAIRDGLINLIKEHFPEVEVISGTATAGIPHAAFIAEKLKLPMNYVRSSNKSHGKQNQIEGAKSEGKKVVVIEDLISTGGSSVTAVEALKLAGAEVLGVVAIFTYGLKKADDTFSNIQLPFYTLSDYSELIEVAENEGKISSEDIQTLVEWRDNLA.

5-phospho-alpha-D-ribose 1-diphosphate contacts are provided by residues R94, K98, H100, and 120-128 (EDLISTGGS). S124 contributes to the orotate binding site.

It belongs to the purine/pyrimidine phosphoribosyltransferase family. PyrE subfamily. In terms of assembly, homodimer. Mg(2+) is required as a cofactor.

The enzyme catalyses orotidine 5'-phosphate + diphosphate = orotate + 5-phospho-alpha-D-ribose 1-diphosphate. It participates in pyrimidine metabolism; UMP biosynthesis via de novo pathway; UMP from orotate: step 1/2. Its function is as follows. Catalyzes the transfer of a ribosyl phosphate group from 5-phosphoribose 1-diphosphate to orotate, leading to the formation of orotidine monophosphate (OMP). This Staphylococcus aureus (strain MSSA476) protein is Orotate phosphoribosyltransferase.